Here is a 307-residue protein sequence, read N- to C-terminus: Lipid droplet-associated hydrolase (307 aa).

Ser119 (nucleophile) is an active-site residue. Residues 157 to 200 (GWVFTKVAMPLYSVFGYIFFSFFNFLPVWLRLMLIQIYFLIFSI) form a potential amphipathic helix required for binding to lipid droplets region. 2 helical membrane-spanning segments follow: residues 166–186 (PLYS…PVWL) and 188–208 (LMLI…LGTA). Residues Asp254 and His283 each act as charge relay system in the active site.

The protein belongs to the AB hydrolase superfamily. LDAH family. As to quaternary structure, interacts with the juvenile hormone hydrolase enzymes Jheh1 and Jheh2. Also interacts with Hmu, Cpr, Gp93 and Pvr. Expressed in accessory glands.

It is found in the lipid droplet. It localises to the endoplasmic reticulum membrane. The catalysed reaction is a cholesterol ester + H2O = cholesterol + a fatty acid + H(+). In terms of biological role, probable serine lipid hydrolase associated with lipid droplets. Appears to lack or have very low cholesterol esterase activity. Appears to lack triglyceride lipase activity. Involved in cholesterol and triglyceride homeostasis; stimulates cellular triglyceride accumulation and cellular cholesterol release. Involved in negatively regulating juvenile hormone (JH) and possibly, insulin signaling activities such as triacylglycerols (TAG) storage, and thereby plays a role in the endocrine regulation of organismal growth and survival. Likely functions by enhancing the activity of the JH hydrolase enzymes Jheh1 and Jheh2. Required for lipid droplet positioning and fat storage. This is Lipid droplet-associated hydrolase from Drosophila melanogaster (Fruit fly).